The following is a 397-amino-acid chain: Ribosomal RNA large subunit methyltransferase I (397 aa).

The region spanning 2–82 (TTSIYLVKGR…EVINVDFFVK (81 aa)) is the PUA domain.

Belongs to the methyltransferase superfamily. RlmI family.

Its subcellular location is the cytoplasm. The enzyme catalyses cytidine(1962) in 23S rRNA + S-adenosyl-L-methionine = 5-methylcytidine(1962) in 23S rRNA + S-adenosyl-L-homocysteine + H(+). Its function is as follows. Specifically methylates the cytosine at position 1962 (m5C1962) of 23S rRNA. The chain is Ribosomal RNA large subunit methyltransferase I from Photobacterium profundum (strain SS9).